The following is a 254-amino-acid chain: MRLLLDLGNSAIKWAVVPPGGAAWQTGRLAYADGAGPEDTAAALGGRIPSTVAPARICVASVLAPAWQRRFDTALERAWGGPVQHLVASAAAAGVTNGYDQPEQLGVDRWAALIGARAVAPEGACIVDVGTAITVDGLDADGRHLGGAIFPGARLLHQALARGTARLPDSPIGAAALPARSTEEGIAAGVAVGAGAAVTALADAILAACPPGAQRLITGGGGGELAAGLSPAWCHRPYLVLEGLLHWSRHEARR.

An ATP-binding site is contributed by 6 to 13 (DLGNSAIK). Substrate contacts are provided by residues Y99 and 106–109 (GVDR). D108 serves as the catalytic Proton acceptor. Residue D128 coordinates K(+). T131 is an ATP binding site. T182 contributes to the substrate binding site.

It belongs to the type III pantothenate kinase family. In terms of assembly, homodimer. The cofactor is NH4(+). K(+) serves as cofactor.

The protein resides in the cytoplasm. The enzyme catalyses (R)-pantothenate + ATP = (R)-4'-phosphopantothenate + ADP + H(+). It functions in the pathway cofactor biosynthesis; coenzyme A biosynthesis; CoA from (R)-pantothenate: step 1/5. Its function is as follows. Catalyzes the phosphorylation of pantothenate (Pan), the first step in CoA biosynthesis. The protein is Type III pantothenate kinase of Halorhodospira halophila (strain DSM 244 / SL1) (Ectothiorhodospira halophila (strain DSM 244 / SL1)).